The following is a 469-amino-acid chain: Ectonucleoside triphosphate diphosphohydrolase 5 (469 aa).

An N-terminal signal peptide occupies residues 1–24; it reads MATPWGAVFFLLMIACAGSTVFYR. Catalysis depends on Glu172, which acts as the Proton acceptor. An N-linked (GlcNAc...) asparagine glycan is attached at Asn232. Cystine bridges form between Cys272–Cys303 and Cys363–Cys377.

Belongs to the GDA1/CD39 NTPase family. As to quaternary structure, monomer; active form. Homodimer; disulfide-linked. Homodimers are enzymatically inactive. It depends on Ca(2+) as a cofactor. Mg(2+) is required as a cofactor. N-glycosylated; high-mannose type. As to expression, expressed in fetal cells and most adult tissues.

The protein resides in the endoplasmic reticulum. Its subcellular location is the secreted. The enzyme catalyses a ribonucleoside 5'-diphosphate + H2O = a ribonucleoside 5'-phosphate + phosphate + H(+). The catalysed reaction is GDP + H2O = GMP + phosphate + H(+). It carries out the reaction UDP + H2O = UMP + phosphate + H(+). It catalyses the reaction IDP + H2O = IMP + phosphate + H(+). The enzyme catalyses CDP + H2O = CMP + phosphate + H(+). The catalysed reaction is ADP + H2O = AMP + phosphate + H(+). Its pathway is protein modification; protein glycosylation. Hydrolyzes nucleoside diphosphates with a preference for GDP, IDP and UDP compared to ADP and CDP. In the lumen of the endoplasmic reticulum, hydrolyzes UDP that acts as an end-product feedback inhibitor of the UDP-Glc:glycoprotein glucosyltransferases. UMP can be transported back by an UDP-sugar antiporter to the cytosol where it is consumed to regenerate UDP-glucose. Therefore, it positively regulates protein reglucosylation by clearing UDP from the ER lumen and by promoting the regeneration of UDP-glucose. Protein reglucosylation is essential to proper glycoprotein folding and quality control in the ER. In Mesocricetus auratus (Golden hamster), this protein is Ectonucleoside triphosphate diphosphohydrolase 5 (ENTPD5).